The primary structure comprises 442 residues: MAKKLYIETHGCQMNEYDSSRMVDLLGEHQALEVTARAEDADVILLNTCSIRERAQDRVYSQLGRWRELKLANPEMVIAVGGCVASQEGAAIRDRAPYVDVVFGPQTLHRLPEMIDAARITRLPQVDVSFPEIEKFDHLPEPRVDGPSAYVSVMEGCSKYCTFCVVPYTRGEEVSRPFDDVLSEVIHLAENGVREVTLLGQNVNGYRGTTHDGRVADLADLIRVVAAVDGIDRIRYTTSHPLEFSDSLIQAHAEVPELVKHLHLPVQSGSDRILAAMKRNHTTLEYKSRLRKLRAAVPGISISSDFIVGFPGETEKDFDNTMKLIEDVGFDFSFSFVYSPRPGTPAADLKDDTPEALKKERLAALQHRLNQQGFEISRQMVGSIQRILVTDYSKKDPGELQGRTENNRIVNFRCNNPKLIGQFADVHIDDAQPHSLRGSLLQ.

Residues 3-120 enclose the MTTase N-terminal domain; sequence KKLYIETHGC…LPEMIDAARI (118 aa). [4Fe-4S] cluster is bound by residues C12, C49, C83, C157, C161, and C164. The Radical SAM core domain occupies 143-375; that stretch reads RVDGPSAYVS…QHRLNQQGFE (233 aa). The TRAM domain occupies 378–442; the sequence is RQMVGSIQRI…PHSLRGSLLQ (65 aa).

It belongs to the methylthiotransferase family. MiaB subfamily. In terms of assembly, monomer. [4Fe-4S] cluster is required as a cofactor.

It localises to the cytoplasm. It carries out the reaction N(6)-dimethylallyladenosine(37) in tRNA + (sulfur carrier)-SH + AH2 + 2 S-adenosyl-L-methionine = 2-methylsulfanyl-N(6)-dimethylallyladenosine(37) in tRNA + (sulfur carrier)-H + 5'-deoxyadenosine + L-methionine + A + S-adenosyl-L-homocysteine + 2 H(+). In terms of biological role, catalyzes the methylthiolation of N6-(dimethylallyl)adenosine (i(6)A), leading to the formation of 2-methylthio-N6-(dimethylallyl)adenosine (ms(2)i(6)A) at position 37 in tRNAs that read codons beginning with uridine. This is tRNA-2-methylthio-N(6)-dimethylallyladenosine synthase from Pseudomonas savastanoi pv. phaseolicola (strain 1448A / Race 6) (Pseudomonas syringae pv. phaseolicola (strain 1448A / Race 6)).